The sequence spans 612 residues: BTB/POZ domain-containing protein 9 (612 aa).

In terms of domain architecture, BTB spans Gly36–Asp104. The 99-residue stretch at Val142–Arg240 folds into the BACK domain. The segment at Gln559–Gln612 is disordered. The segment covering Arg589–Gln612 has biased composition (low complexity).

In terms of tissue distribution, detected throughout the gray matter of the spinal cord including the motor neurons (at protein level). In the brain, detected in the neurons of the hippocampus and in the Purkinje cells of the cerebellum (at protein level). Also detected in the terospenial cortex, bed nucleus of the stria terminalis (BST) and the ventrolateral thalamus (VL) (at protein level).

The polypeptide is BTB/POZ domain-containing protein 9 (Btbd9) (Rattus norvegicus (Rat)).